A 655-amino-acid chain; its full sequence is Inactive serine protease scarface (655 aa).

The first 24 residues, 1–24, serve as a signal peptide directing secretion; the sequence is MSASHFREQLALCITLAVLAAASG. Polar residues-rich tracts occupy residues 213 to 225 and 237 to 252; these read TQAP…TTAV and PSTT…QTSR. Positions 213–319 are disordered; the sequence is TQAPFRPQPT…QPSNQKPIYR (107 aa). The interval 343–407 is CLIP; that stretch reads KCASALVCTS…PNYVDPWPVN (65 aa). 7 cysteine pairs are disulfide-bonded: C344-C394, C350-C383, C356-C395, C450-C466, C547-C605, C579-C587, and C595-C623. In terms of domain architecture, Peptidase S1 spans 421–644; that stretch reads PTGVKDLDAN…DIKWINTAFA (224 aa).

Belongs to the peptidase S1 family.

It is found in the secreted. Functionally, inactive serine protease that plays a role in germ-band retraction and dorsal closure morphogenesis in embryogenesis; contributes to amnioserosa attachment and epithelial apico-basal polarity by regulating the localization of laminin LanA on the apical side of the amnioserosa epithelium. Contributes to epithelial morphogenesis probably by regulating the bsk/JNK pathway, as part of a negative-feedback loop, and by modulating the cross-talk between the Egfr, bsk/JNK and dpp signal transduction pathways. In larval development, antagonizes the morphogenetic movements controlled by the bsk/JNK signaling including male genitalia formation and thorax development. The polypeptide is Inactive serine protease scarface (Drosophila melanogaster (Fruit fly)).